The sequence spans 295 residues: Calcium-regulated actin-bundling protein (295 aa).

In terms of assembly, monomer.

Functionally, may contribute to the structure and reorganization of filopodia and pseudopodia accompanying cell movements. The sequence is that of Calcium-regulated actin-bundling protein (abpB) from Dictyostelium discoideum (Social amoeba).